A 468-amino-acid polypeptide reads, in one-letter code: Siroheme synthase 1 (468 aa).

The interval 1 to 204 (MDYLPIFCRL…GDKASANQLA (204 aa)) is precorrin-2 dehydrogenase /sirohydrochlorin ferrochelatase. Residues 22–23 (EV) and 43–44 (PA) each bind NAD(+). The residue at position 128 (S128) is a Phosphoserine. The interval 216 to 468 (GEVILVGAGP…NHGVQAAALA (253 aa)) is uroporphyrinogen-III C-methyltransferase. Residue P225 participates in S-adenosyl-L-methionine binding. D248 (proton acceptor) is an active-site residue. The active-site Proton donor is the K270. S-adenosyl-L-methionine contacts are provided by residues 301–303 (GGD), I306, 331–332 (TA), M383, and G412.

In the N-terminal section; belongs to the precorrin-2 dehydrogenase / sirohydrochlorin ferrochelatase family. It in the C-terminal section; belongs to the precorrin methyltransferase family.

The catalysed reaction is uroporphyrinogen III + 2 S-adenosyl-L-methionine = precorrin-2 + 2 S-adenosyl-L-homocysteine + H(+). It catalyses the reaction precorrin-2 + NAD(+) = sirohydrochlorin + NADH + 2 H(+). It carries out the reaction siroheme + 2 H(+) = sirohydrochlorin + Fe(2+). It functions in the pathway cofactor biosynthesis; adenosylcobalamin biosynthesis; precorrin-2 from uroporphyrinogen III: step 1/1. It participates in cofactor biosynthesis; adenosylcobalamin biosynthesis; sirohydrochlorin from precorrin-2: step 1/1. The protein operates within porphyrin-containing compound metabolism; siroheme biosynthesis; precorrin-2 from uroporphyrinogen III: step 1/1. Its pathway is porphyrin-containing compound metabolism; siroheme biosynthesis; siroheme from sirohydrochlorin: step 1/1. It functions in the pathway porphyrin-containing compound metabolism; siroheme biosynthesis; sirohydrochlorin from precorrin-2: step 1/1. Multifunctional enzyme that catalyzes the SAM-dependent methylations of uroporphyrinogen III at position C-2 and C-7 to form precorrin-2 via precorrin-1. Then it catalyzes the NAD-dependent ring dehydrogenation of precorrin-2 to yield sirohydrochlorin. Finally, it catalyzes the ferrochelation of sirohydrochlorin to yield siroheme. The protein is Siroheme synthase 1 of Aeromonas salmonicida (strain A449).